The primary structure comprises 1331 residues: NPC1-like intracellular cholesterol transporter 1 (1331 aa).

Positions 1-20 are cleaved as a signal peptide; that stretch reads MAAAWLGWLLWALLLSAAQG. Residues 21–282 are Extracellular-facing; that stretch reads ELYTPKHEAG…RPSFYMGRMP (262 aa). 9 cysteine pairs are disulfide-bonded: Cys32/Cys90, Cys38/Cys56, Cys77/Cys125, Cys91/Cys129, Cys113/Cys254, Cys116/Cys172, Cys189/Cys197, Cys243/Cys259, and Cys256/Cys263. N-linked (GlcNAc...) asparagine glycans are attached at residues Asn53 and Asn85. Asn138 is a glycosylation site (N-linked (GlcNAc...) asparagine). A glycan (N-linked (GlcNAc...) asparagine) is linked at Asn244. A helical transmembrane segment spans residues 283–303; it reads GWLALIIIFTAVFVLLSAVLV. The Cytoplasmic portion of the chain corresponds to 304–352; it reads RLRVVSNRNKNKAEGPQEAPKLPHKHKLSPHTILGRFFQNWGTRVASWP. The helical transmembrane segment at 353–373 threads the bilayer; the sequence is LTVLALSFIVVIALAAGLTFI. The Extracellular segment spans residues 374-632; it reads ELTTDPVELW…DEINRTTIQD (259 aa). N-linked (GlcNAc...) asparagine glycosylation is found at Asn416, Asn431, Asn464, Asn479, Asn497, and Asn506. Cysteines 471 and 485 form a disulfide. Cys525 and Cys542 are joined by a disulfide. 2 N-linked (GlcNAc...) asparagine glycosylation sites follow: Asn606 and Asn626. In terms of domain architecture, SSD spans 632 to 797; sequence DLPVFAVSYI…MTAFVALLSL (166 aa). A helical transmembrane segment spans residues 633-653; that stretch reads LPVFAVSYIIVFLYISLALGS. The Cytoplasmic portion of the chain corresponds to 654–665; the sequence is YSRCSRVAVESK. The chain crosses the membrane as a helical span at residues 666-686; it reads ATLGLGGVIVVLGAVLAAMGF. The Extracellular segment spans residues 687–696; sequence YSYLGVPSSL. Residues 697-717 traverse the membrane as a helical segment; it reads VIIQVVPFLVLAVGADNIFIF. At 718–742 the chain is on the cytoplasmic side; sequence VLEYQRLPRMPGEQREAHIGRTLGS. A helical membrane pass occupies residues 743–763; that stretch reads VAPSMLLCSLSEAICFFLGAL. Residues 764–776 lie on the Extracellular side of the membrane; the sequence is TPMPAVRTFALTS. Residues 777–797 form a helical membrane-spanning segment; sequence GLAIILDFLLQMTAFVALLSL. The Cytoplasmic portion of the chain corresponds to 798–846; it reads DSKRQEASRPDVLCCFSTRKLPPPKEKEGLLLRFFRKIYAPFLLHRFIR. Residues 847–867 form a helical membrane-spanning segment; sequence PVVMLLFLTLFGANLYLMCNI. Topologically, residues 868–1113 are extracellular; the sequence is NVGLDQELAL…QQYLTVLPEG (246 aa). Asn909 and Asn917 each carry an N-linked (GlcNAc...) asparagine glycan. 3 cysteine pairs are disulfide-bonded: Cys920/Cys925, Cys967/Cys1025, and Cys981/Cys990. Asn996, Asn1038, and Asn1076 each carry an N-linked (GlcNAc...) asparagine glycan. The helical transmembrane segment at 1114–1134 threads the bilayer; the sequence is IFTLALCFVPTFVVCYLLLGL. Residues 1135 to 1142 are Cytoplasmic-facing; the sequence is DMCSGILN. Residues 1143 to 1163 traverse the membrane as a helical segment; that stretch reads LLSIIMILVDTIGLMAVWGIS. The Extracellular segment spans residues 1164-1165; that stretch reads YN. A helical transmembrane segment spans residues 1166 to 1186; it reads AVSLINLVTAVGMSVEFVSHI. At 1187 to 1206 the chain is on the cytoplasmic side; that stretch reads TRSFAVSTKPTRLERAKDAT. A helical membrane pass occupies residues 1207-1227; it reads VFMGSAVFAGVAMTNFPGILI. The Extracellular portion of the chain corresponds to 1228–1242; that stretch reads LGFAQAQLIQIFFFR. Residues 1243 to 1263 form a helical membrane-spanning segment; the sequence is LNLLITLLGLLHGLVFLPVVL. At 1264-1331 the chain is on the cytoplasmic side; it reads SYLGPDVNQA…SSLPKSDQKF (68 aa).

Belongs to the patched family. In terms of assembly, interacts with RAB11A, MYO5B and RAB11FIP2. Interaction with RAB11A, MYO5B and RAB11FIP2 is required for proper transport to the plasma membrane upon cholesterol depletion. Interacts with NPC2. Interacts with LIMA1. In terms of processing, highly glycosylated. Small intestine showed the highest level of expression. Expression in other tissues including gall bladder, liver, testis and stomach is also observed. Along the duodenum-ileum axis, the levels vary in different segments of the intestine with peak expression in the proximal jejunum. Protein expression is confined to the enterocyte. Discrete localization to the epithelial layer bordering the luminal space along the crypt-villus axis. Protein expression in the enterocyte is observed closest to the luminal space. Expression in enterocytes from the proximal (jejunum) but not in the distal (ileum) region.

Its subcellular location is the apical cell membrane. It localises to the cell membrane. The catalysed reaction is cholesterol(in) = cholesterol(out). It carries out the reaction sitosterol(out) = sitosterol(in). Its function is as follows. Plays a major role in cholesterol homeostasis. Critical for the uptake of cholesterol across the plasma membrane of the intestinal enterocyte. Involved in plant sterol absorption, it transports sitosterol, although at lower rates than cholesterol. Is the direct molecular target of ezetimibe, a drug that inhibits cholesterol absorption and is approved for the treatment of hypercholesterolemia. May have a function in the transport of multiple lipids and their homeostasis, thereby influencing lipid metabolism regulation. May be involved in caveolin trafficking from the plasma membrane. Acts as a negative regulator of NPC2 and down-regulates its expression and secretion by inhibiting its maturation and accelerating its degradation. This is NPC1-like intracellular cholesterol transporter 1 from Rattus norvegicus (Rat).